A 484-amino-acid polypeptide reads, in one-letter code: Probable peptide/nitrate transporter At3g43790 (484 aa).

The next 12 helical transmembrane spans lie at 39 to 59 (FIWLVSLCTALPISSLFPYIY), 76 to 96 (FYAGFVGSSFMIGRALTSIFW), 107 to 127 (PIILIGTFSVIIFNTLFGLST), 129 to 149 (FWLAISVRFLLGCFNCLLGVI), 168 to 188 (VVSTSRGIGLILGPAIGGYLA), 210 to 230 (FLPSLVISVYATAVLIACWWL), 278 to 298 (MAIIIVYCVFSLQEIAYNEIF), 318 to 338 (VGEVLAISGLGLLVFQLLVYP), 355 to 375 (VLLIPLLSCYPYIALLSGVTL), 381 to 401 (CASIIKNALSISLVTGLFIML), 416 to 436 (ISMTAMSVFKSFGPAGGGVLF), and 460 to 480 (VFLVLNLVQLVGLILTFIPYI).

It belongs to the major facilitator superfamily.

The protein localises to the membrane. This is Probable peptide/nitrate transporter At3g43790 (ZIFL2) from Arabidopsis thaliana (Mouse-ear cress).